Consider the following 176-residue polypeptide: Large ribosomal subunit protein uL10 (176 aa).

Belongs to the universal ribosomal protein uL10 family. As to quaternary structure, part of the ribosomal stalk of the 50S ribosomal subunit. The N-terminus interacts with L11 and the large rRNA to form the base of the stalk. The C-terminus forms an elongated spine to which L12 dimers bind in a sequential fashion forming a multimeric L10(L12)X complex.

Functionally, forms part of the ribosomal stalk, playing a central role in the interaction of the ribosome with GTP-bound translation factors. This is Large ribosomal subunit protein uL10 from Thioalkalivibrio sulfidiphilus (strain HL-EbGR7).